Consider the following 242-residue polypeptide: Small ribosomal subunit protein uS2 (242 aa).

Belongs to the universal ribosomal protein uS2 family.

The protein is Small ribosomal subunit protein uS2 of Aeromonas hydrophila subsp. hydrophila (strain ATCC 7966 / DSM 30187 / BCRC 13018 / CCUG 14551 / JCM 1027 / KCTC 2358 / NCIMB 9240 / NCTC 8049).